We begin with the raw amino-acid sequence, 777 residues long: Proton-coupled zinc antiporter SLC30A5 (777 aa).

Residues 1–28 (MEEKYSSNVMSSGRLGPVDAPESRLTRY) are Cytoplasmic-facing. Residues 29 to 49 (IVLLCFTKFLKALGIFESYDL) form a helical membrane-spanning segment. Residues 50-52 (LKV) are Lumenal-facing. Residues 53 to 73 (VHIVQFIFILKLGSTCFMVLF) form a helical membrane-spanning segment. Residues 74–94 (QKPFSSGKSITKRQWVSIVKH) lie on the Cytoplasmic side of the membrane. Residues 95 to 115 (AFVSCIISLLWFFGLTLCGPL) form a helical membrane-spanning segment. Topologically, residues 116-117 (RT) are lumenal. A helical membrane pass occupies residues 118 to 138 (LLLFEHSDIVVISLLTVLFTG). Residues 139 to 148 (SGGGPSKTRG) are Cytoplasmic-facing. A helical transmembrane segment spans residues 149–169 (AAFFIIAVICLLLFDNDDLMA). The Lumenal portion of the chain corresponds to 170 to 189 (KIAEHPEGHHDSALTHFLYR). A helical transmembrane segment spans residues 190–210 (AFFLLGVADHKGGVLLLVLAL). Topologically, residues 211-234 (CFNVGFHTASRKLSLDIGGAKRLQ) are cytoplasmic. Residues 235–255 (ALSHLVSVIILSPWVIILSAT) traverse the membrane as a helical segment. The Lumenal segment spans residues 256-263 (TESKIESW). The helical transmembrane segment at 264–284 (SALIMPFMTVIFSVMIMDFYV) threads the bilayer. The Cytoplasmic portion of the chain corresponds to 285-299 (ESVCSVKMEPSKCAR). The helical transmembrane segment at 300 to 320 (YGSFLIFASALLLGNFWTHPI) threads the bilayer. Residues 321-338 (TDQLRAMNKPAHQLHTEH) are Lumenal-facing. The helical transmembrane segment at 339-359 (VLSGGVVVSAIFFILSAQILA) threads the bilayer. Topologically, residues 360–414 (SSSRKGQRGTLVGYSPEGTPLYNFMGDALHNTSPSMPRFLKDSLKQILEEYDSRQ) are cytoplasmic. A helical transmembrane segment spans residues 415-435 (IFYFLCLNLAFTFVEIFYGVW). At 436 to 444 (TNSLGLLSD) the chain is on the lumenal side. Residues 445–465 (GFHMLFDCSALVMGLIAALMT) traverse the membrane as a helical segment. His-447 and Asp-451 together coordinate Zn(2+). The Cytoplasmic segment spans residues 466–484 (RWKATRIFSYGYGRVEILS). Residues 485 to 505 (GFINGLFLVVIAFFVFIEAVA) form a helical membrane-spanning segment. Residues 506 to 516 (RIYDPPDINTD) are Lumenal-facing. A helical membrane pass occupies residues 517–537 (MLTPVSVGGLIVNLVGICAFS). Residues 538–586 (HAHSHGAARGGCPSHDHGHSHHGHGHSHGHNHGHSHSDHGHNHGHTHNH) form a his-rich loop; required for zinc transport region. Over 538 to 604 (HAHSHGAARG…VGMNANMRGV (67 aa)) the chain is Cytoplasmic. The interval 547–593 (GGCPSHDHGHSHHGHGHSHGHNHGHSHSDHGHNHGHTHNHGHSHGSA) is disordered. 2 stretches are compositionally biased toward basic residues: residues 555–571 (GHSHHGHGHSHGHNHGH) and 579–589 (NHGHTHNHGHS). A helical membrane pass occupies residues 605–625 (FSHVLADTLGSVGVIVSTILI). Residues His-607 and Asp-611 each contribute to the Zn(2+) site. Over 626–629 (RQFG) the chain is Lumenal. Residues 630-650 (WLIADPLCSLFIAVLIFGSVL) traverse the membrane as a helical segment. Residues 651 to 777 (PLLKDACQVI…KYYKDGTYIM (127 aa)) lie on the Cytoplasmic side of the membrane.

Belongs to the cation diffusion facilitator (CDF) transporter (TC 2.A.4) family. SLC30A subfamily. In terms of assembly, heterodimer with SLC30A6/ZNT6; form a functional zinc ion transmembrane transporter.

The protein resides in the golgi apparatus. It localises to the golgi stack membrane. It is found in the cytoplasmic vesicle. Its subcellular location is the COPII-coated vesicle membrane. The protein localises to the secretory vesicle membrane. The protein resides in the trans-Golgi network membrane. It carries out the reaction Zn(2+)(in) + 2 H(+)(out) = Zn(2+)(out) + 2 H(+)(in). Its function is as follows. Together with SLC30A6 forms a functional proton-coupled zinc ion antiporter mediating zinc entry into the lumen of organelles along the secretory pathway. By contributing to zinc ion homeostasis within the early secretory pathway, regulates the activation and folding of enzymes like alkaline phosphatases and enzymes involved in phosphatidylinositol glycan anchor biosynthesis. This Xenopus tropicalis (Western clawed frog) protein is Proton-coupled zinc antiporter SLC30A5 (slc30a5).